Consider the following 635-residue polypeptide: Probable serine/threonine-protein kinase DDB_G0270146 (635 aa).

Residues 77-329 enclose the Protein kinase domain; it reads VISDIAIGKG…AKELLSHPWI (253 aa). ATP-binding positions include 83–91 and K106; that span reads IGKGAFATV. Residue D199 is the Proton acceptor of the active site. Over residues 360 to 392 the composition is skewed to low complexity; sequence SLLSNSSGGDDSVTDSDLSISNQSSRSSSFLLD. Positions 360–405 are disordered; that stretch reads SLLSNSSGGDDSVTDSDLSISNQSSRSSSFLLDDGGGGGGSKNHTV. 2 coiled-coil regions span residues 417–456 and 536–585; these read IEFN…KYRE and KKAL…KDSS. Residues 540-582 show a composition bias toward basic and acidic residues; sequence EAQKRREKEQEKLKEQEKLKEKKKEKDIKKEKDKKDKKDKQLK. Residues 540–635 form a disordered region; sequence EAQKRREKEQ…GRSSSKIFNE (96 aa). A compositionally biased stretch (low complexity) spans 583 to 598; it reads DSSSSTTTTNSTPSTP. Positions 626–635 are enriched in polar residues; sequence GRSSSKIFNE.

It belongs to the protein kinase superfamily. STE Ser/Thr protein kinase family. The cofactor is Mg(2+).

The catalysed reaction is L-seryl-[protein] + ATP = O-phospho-L-seryl-[protein] + ADP + H(+). It catalyses the reaction L-threonyl-[protein] + ATP = O-phospho-L-threonyl-[protein] + ADP + H(+). The sequence is that of Probable serine/threonine-protein kinase DDB_G0270146 from Dictyostelium discoideum (Social amoeba).